The chain runs to 205 residues: Cytochrome c biogenesis ATP-binding export protein CcmA 1 (205 aa).

An ABC transporter domain is found at 2–205; the sequence is LEARDLYCER…LALTGGGAGL (204 aa). 34 to 41 contributes to the ATP binding site; that stretch reads GGNGAGKT.

This sequence belongs to the ABC transporter superfamily. CcmA exporter (TC 3.A.1.107) family. As to quaternary structure, the complex is composed of two ATP-binding proteins (CcmA) and two transmembrane proteins (CcmB).

It is found in the cell inner membrane. The catalysed reaction is heme b(in) + ATP + H2O = heme b(out) + ADP + phosphate + H(+). In terms of biological role, part of the ABC transporter complex CcmAB involved in the biogenesis of c-type cytochromes; once thought to export heme, this seems not to be the case, but its exact role is uncertain. Responsible for energy coupling to the transport system. The sequence is that of Cytochrome c biogenesis ATP-binding export protein CcmA 1 from Salmonella typhimurium (strain LT2 / SGSC1412 / ATCC 700720).